Consider the following 672-residue polypeptide: COBRA-like protein 10 (672 aa).

An N-terminal signal peptide occupies residues 1–35 (MRAIDVKTGMKIPWDVRYSLSLFIFLSSILFLSNG). Asparagine 79, asparagine 135, asparagine 264, asparagine 328, asparagine 339, asparagine 368, asparagine 422, asparagine 442, asparagine 483, asparagine 562, asparagine 570, and asparagine 589 each carry an N-linked (GlcNAc...) asparagine glycan. The region spanning 502–607 (KLPCPDNCGV…PVPGKQQSVI (106 aa)) is the CBM2 domain. Residue serine 646 is the site of GPI-anchor amidated serine attachment. Positions 647–672 (SGHRRGISVSMSFVFATIAAFALMMD) are cleaved as a propeptide — removed in mature form. Residues 664-672 (IAAFALMMD) carry the Required for processing by the PIG complex, a critical step for apical plasma membrane localization in pollen tubes motif.

This sequence belongs to the COBRA family. Post-translationally, the GPI-anchor attachment at Ser-646 requires APTG1. As to expression, expressed in roots, stems, leaves, flowers and siliques. Specific expression in the pollen tube.

Its subcellular location is the cell membrane. It is found in the cytoplasm. It localises to the vesicle. In terms of biological role, involved in the deposition of apical pectin cap and cellulose microfibrils in pollen tubes. Not essential for pollen development, hydration or germination, but required for pollen tubes growth in the female transmitting tract of pistil and toward micropyles, via the perception of ovule guidance cues. This Arabidopsis thaliana (Mouse-ear cress) protein is COBRA-like protein 10.